A 394-amino-acid chain; its full sequence is Deoxyguanosinetriphosphate triphosphohydrolase-like protein (394 aa).

The segment at 1 to 34 (MSSSPFFVPRAPYAEDPAKSRGRRFPEDESRTRT) is disordered. Positions 16–34 (DPAKSRGRRFPEDESRTRT) are enriched in basic and acidic residues. The region spanning 70 to 210 (RLTHSLEVAQ…AALADDIAYN (141 aa)) is the HD domain.

Belongs to the dGTPase family. Type 2 subfamily.

The sequence is that of Deoxyguanosinetriphosphate triphosphohydrolase-like protein from Caulobacter sp. (strain K31).